The primary structure comprises 55 residues: Small ribosomal subunit protein uS14 (55 aa).

Residues 1–20 (MSFEPSGPHSHRKPFGKGSR) are disordered. Zn(2+) is bound by residues Cys22, Cys25, Cys38, and Cys41.

The protein belongs to the universal ribosomal protein uS14 family. Zn(2+) is required as a cofactor.

This chain is Small ribosomal subunit protein uS14 (RPS29), found in Encephalitozoon cuniculi (strain GB-M1) (Microsporidian parasite).